The chain runs to 473 residues: Tyrosine phenol-lyase (473 aa).

The residue at position 257 (Lys-257) is an N6-(pyridoxal phosphate)lysine.

The protein belongs to the beta-eliminating lyase family. In terms of assembly, homotetramer. It depends on pyridoxal 5'-phosphate as a cofactor.

It catalyses the reaction L-tyrosine + H2O = phenol + pyruvate + NH4(+). The sequence is that of Tyrosine phenol-lyase from Intrasporangium calvum (strain ATCC 23552 / DSM 43043 / JCM 3097 / NBRC 12989 / NCIMB 10167 / NRRL B-3866 / 7 KIP).